Reading from the N-terminus, the 317-residue chain is 4-hydroxy-3-methylbut-2-enyl diphosphate reductase (317 aa).

Cys-12 serves as a coordination point for [4Fe-4S] cluster. 2 residues coordinate (2E)-4-hydroxy-3-methylbut-2-enyl diphosphate: His-43 and His-81. Dimethylallyl diphosphate-binding residues include His-43 and His-81. Positions 43 and 81 each coordinate isopentenyl diphosphate. Residue Cys-103 participates in [4Fe-4S] cluster binding. His-131 lines the (2E)-4-hydroxy-3-methylbut-2-enyl diphosphate pocket. His-131 lines the dimethylallyl diphosphate pocket. Isopentenyl diphosphate is bound at residue His-131. Glu-133 acts as the Proton donor in catalysis. Thr-172 contributes to the (2E)-4-hydroxy-3-methylbut-2-enyl diphosphate binding site. Cys-200 lines the [4Fe-4S] cluster pocket. Residues Ser-228, Asn-230, and Ser-273 each contribute to the (2E)-4-hydroxy-3-methylbut-2-enyl diphosphate site. Dimethylallyl diphosphate contacts are provided by Ser-228, Asn-230, and Ser-273. 3 residues coordinate isopentenyl diphosphate: Ser-228, Asn-230, and Ser-273.

This sequence belongs to the IspH family. [4Fe-4S] cluster is required as a cofactor.

It carries out the reaction isopentenyl diphosphate + 2 oxidized [2Fe-2S]-[ferredoxin] + H2O = (2E)-4-hydroxy-3-methylbut-2-enyl diphosphate + 2 reduced [2Fe-2S]-[ferredoxin] + 2 H(+). The enzyme catalyses dimethylallyl diphosphate + 2 oxidized [2Fe-2S]-[ferredoxin] + H2O = (2E)-4-hydroxy-3-methylbut-2-enyl diphosphate + 2 reduced [2Fe-2S]-[ferredoxin] + 2 H(+). It functions in the pathway isoprenoid biosynthesis; dimethylallyl diphosphate biosynthesis; dimethylallyl diphosphate from (2E)-4-hydroxy-3-methylbutenyl diphosphate: step 1/1. It participates in isoprenoid biosynthesis; isopentenyl diphosphate biosynthesis via DXP pathway; isopentenyl diphosphate from 1-deoxy-D-xylulose 5-phosphate: step 6/6. Catalyzes the conversion of 1-hydroxy-2-methyl-2-(E)-butenyl 4-diphosphate (HMBPP) into a mixture of isopentenyl diphosphate (IPP) and dimethylallyl diphosphate (DMAPP). Acts in the terminal step of the DOXP/MEP pathway for isoprenoid precursor biosynthesis. The protein is 4-hydroxy-3-methylbut-2-enyl diphosphate reductase of Exiguobacterium sp. (strain ATCC BAA-1283 / AT1b).